The primary structure comprises 148 residues: Outer envelope pore protein 16-1, chloroplastic (148 aa).

Positions 2-73 are contains 4 beta strands; it reads PSSTFSGTVS…EHALKKLCKE (72 aa). Transmembrane regions (helical) follow at residues 75-91, 102-118, and 125-142; these read VYWG…EYGI, NAML…SAVG, and IVID…SQFV.

Belongs to the Tim17/Tim22/Tim23 family. Plastid outer envelope porin OEP16 (TC 1.B.30) subfamily. As to quaternary structure, homodimer and oligomers in membrane. Forms large complexes including TOC33, pPORA and OEP161 during pPORA import into plastids at the plastid envelope membrane. In terms of tissue distribution, expressed predominantly in leaves and cotyledons.

The protein resides in the plastid. It localises to the chloroplast outer membrane. Its subcellular location is the etioplast membrane. Its activity is regulated as follows. Stimulated by GTP. Its function is as follows. Voltage-dependent high-conductance channel with a slight cation-selectivity; selective for amino acids but excludes triosephosphates or uncharged sugars. Non-essential amino acid-selective channel protein and translocation pore for NADPH:protochlorophyllide oxidoreductase A (PORA) and possibly PORB. Involved in PORA precursor (pPORA) import and thus confers photoprotection onto etiolated seedlings during greening. The protein is Outer envelope pore protein 16-1, chloroplastic (OEP161) of Arabidopsis thaliana (Mouse-ear cress).